The following is a 440-amino-acid chain: Deoxyguanosinetriphosphate triphosphohydrolase-like protein (440 aa).

Positions 62-255 (RLTHSLEAAQ…MELADDIAYG (194 aa)) constitute an HD domain.

Belongs to the dGTPase family. Type 2 subfamily.

The chain is Deoxyguanosinetriphosphate triphosphohydrolase-like protein from Vibrio parahaemolyticus serotype O3:K6 (strain RIMD 2210633).